Consider the following 259-residue polypeptide: Global transcriptional regulator CodY (259 aa).

Residues 1–155 form a GAF domain region; the sequence is MDLLSRARKI…GATVVGMEIL (155 aa). The segment at residues 203–222 is a DNA-binding region (H-T-H motif); sequence ASKIADRVGITRSVIVNALR. S215 carries the phosphoserine modification.

Belongs to the CodY family.

It is found in the cytoplasm. In terms of biological role, DNA-binding global transcriptional regulator which is involved in the adaptive response to starvation and acts by directly or indirectly controlling the expression of numerous genes in response to nutrient availability. During rapid exponential growth, CodY is highly active and represses genes whose products allow adaptation to nutrient depletion. This chain is Global transcriptional regulator CodY, found in Oceanobacillus iheyensis (strain DSM 14371 / CIP 107618 / JCM 11309 / KCTC 3954 / HTE831).